Consider the following 606-residue polypeptide: MNAVVPDSAKTQSAKSNLYTTLAKTHLGEVAAIIVSTLISYGRLTAKDLSNKSEVPLKLVKSTLVSLIQLSCISYWKEESSKQVFYSFNENGLLIFLHSGDIINHIKLTYGDESAGIIQNIIEVGHMKIEDYLQNIEDPEVVFNKENLLLKLFSDGWLSRVQMSNFQPIDDLWNQLYQETLKNTPRSTTISEIKRVNEAKDKTKLKFTNLLESGNSAKELFQIENGIKKLAPSLVIAFNLSRFEKHRRTEQLTNLAKARIGILTSKVYECALQLIEQHSPDLRHSFLKISGLINDPVEEQAFVNSIENQLVDDKKIVFNVKDLVKIAPKDLDLRNSILTHNFLKPTFNPKKRVNDDIPDTNPKKIKTEDGMNNLMIDLDPDVSENNLDFDMHNTDNSEPHSVSLINHHLKLLSSGVIPFLIEITPGTYTVPYTDLMKYVKQCNYDTLIKTTLGLDSFRLLRCLKSLKLADEKTLANTILLKEKTVRNELFKLMNLNMIEIQEVPRSADRAASKTFYLFRHKEFSAYNFLYNSLTFCMADILSNIQQFKNDNKILLEKCEREDVKGNEEELLLESELKTLKNLQLREINNIGKFNRIKTLYEIFDNF.

The tract at residues 533–554 (LTFCMADILSNIQQFKNDNKIL) is leucine-zipper.

It belongs to the RNA polymerase beta chain family. As to quaternary structure, component of the RNA polymerase III (Pol III) complex consisting of 17 subunits.

The protein localises to the nucleus. In terms of biological role, DNA-dependent RNA polymerase catalyzes the transcription of DNA into RNA using the four ribonucleoside triphosphates as substrates. Specific core component of RNA polymerase III which synthesizes small RNAs, such as 5S rRNA and tRNAs. The polypeptide is DNA-directed RNA polymerase III subunit RPC3 (RPC82) (Debaryomyces hansenii (strain ATCC 36239 / CBS 767 / BCRC 21394 / JCM 1990 / NBRC 0083 / IGC 2968) (Yeast)).